A 354-amino-acid polypeptide reads, in one-letter code: Inactive ADP-ribosyltransferase arh2 (354 aa).

This sequence belongs to the ADP-ribosylglycohydrolase family. As to expression, expressed in heart (at protein level). A short form is detected in both heart and tadpole tail (at protein level).

Its subcellular location is the cytoplasm. The protein resides in the myofibril. It localises to the sarcomere. In terms of biological role, required for myofibril assembly and outgrowth of the cardiac chambers in the developing heart. Appears to be catalytically inactive, showing no activity against O-acetyl-ADP-ribose. This chain is Inactive ADP-ribosyltransferase arh2 (adprhl1), found in Xenopus laevis (African clawed frog).